Consider the following 257-residue polypeptide: tRNA (guanine-N(1)-)-methyltransferase (257 aa).

Residues Gly117 and 137–142 contribute to the S-adenosyl-L-methionine site; that span reads LGDFVL.

This sequence belongs to the RNA methyltransferase TrmD family. As to quaternary structure, homodimer.

The protein localises to the cytoplasm. It carries out the reaction guanosine(37) in tRNA + S-adenosyl-L-methionine = N(1)-methylguanosine(37) in tRNA + S-adenosyl-L-homocysteine + H(+). In terms of biological role, specifically methylates guanosine-37 in various tRNAs. The sequence is that of tRNA (guanine-N(1)-)-methyltransferase from Bordetella parapertussis (strain 12822 / ATCC BAA-587 / NCTC 13253).